We begin with the raw amino-acid sequence, 457 residues long: Adenylyltransferase and sulfurtransferase MOCS3 (457 aa).

The disordered stretch occupies residues 40–60; sequence ANGGGNGDGLADEGGERNTGT. Phosphothreonine is present on Thr-63. Residues Gly-102, Asp-123, 130-134, Lys-147, and 191-192 each bind ATP; these read SNFHR and DN. Positions 233 and 236 each coordinate Zn(2+). The active-site Glycyl thioester intermediate; for adenylyltransferase activity is Cys-250. Zn(2+) contacts are provided by Cys-309 and Cys-312. The region spanning 358–455 is the Rhodanese domain; it reads ESQPHLLFDV…WTRKVDPDFP (98 aa). The active-site Cysteine persulfide intermediate; for sulfurtransferase activity is the Cys-414.

In the N-terminal section; belongs to the HesA/MoeB/ThiF family. UBA4 subfamily. Zn(2+) serves as cofactor.

It localises to the cytoplasm. It is found in the cytosol. It carries out the reaction [molybdopterin-synthase sulfur-carrier protein]-C-terminal Gly-Gly + ATP + H(+) = [molybdopterin-synthase sulfur-carrier protein]-C-terminal Gly-Gly-AMP + diphosphate. It catalyses the reaction [molybdopterin-synthase sulfur-carrier protein]-C-terminal Gly-Gly-AMP + S-sulfanyl-L-cysteinyl-[cysteine desulfurase] + AH2 = [molybdopterin-synthase sulfur-carrier protein]-C-terminal-Gly-aminoethanethioate + L-cysteinyl-[cysteine desulfurase] + A + AMP + 2 H(+). The protein operates within tRNA modification; 5-methoxycarbonylmethyl-2-thiouridine-tRNA biosynthesis. It participates in cofactor biosynthesis; molybdopterin biosynthesis. Plays a central role in 2-thiolation of mcm(5)S(2)U at tRNA wobble positions of cytosolic tRNA(Lys), tRNA(Glu) and tRNA(Gln). Also essential during biosynthesis of the molybdenum cofactor. Acts by mediating the C-terminal thiocarboxylation of sulfur carriers URM1 and MOCS2A. Its N-terminus first activates URM1 and MOCS2A as acyl-adenylates (-COAMP), then the persulfide sulfur on the catalytic cysteine is transferred to URM1 and MOCS2A to form thiocarboxylation (-COSH) of their C-terminus. The reaction probably involves hydrogen sulfide that is generated from the persulfide intermediate and that acts as a nucleophile towards URM1 and MOCS2A. Subsequently, a transient disulfide bond is formed. Does not use thiosulfate as sulfur donor; NFS1 probably acting as a sulfur donor for thiocarboxylation reactions. This chain is Adenylyltransferase and sulfurtransferase MOCS3, found in Drosophila willistoni (Fruit fly).